Here is a 188-residue protein sequence, read N- to C-terminus: A-type ATP synthase subunit E (188 aa).

Belongs to the V-ATPase E subunit family. As to quaternary structure, has multiple subunits with at least A(3), B(3), C, D, E, F, H, I and proteolipid K(x).

The protein localises to the cell membrane. In terms of biological role, component of the A-type ATP synthase that produces ATP from ADP in the presence of a proton gradient across the membrane. The protein is A-type ATP synthase subunit E of Archaeoglobus fulgidus (strain ATCC 49558 / DSM 4304 / JCM 9628 / NBRC 100126 / VC-16).